The sequence spans 110 residues: Endoribonuclease SymE (110 aa).

The 46-residue stretch at 29–74 folds into the SpoVT-AbrB domain; the sequence is SRYPDYTRIPALTMKGQWLEAAGFATGTEVDVRVMNGCIVLTAQQP.

This sequence belongs to the SymE family.

It is found in the cytoplasm. Its function is as follows. Involved in the degradation and recycling of damaged RNA. It is itself a target for degradation by the ATP-dependent protease Lon. The sequence is that of Endoribonuclease SymE from Salmonella typhi.